We begin with the raw amino-acid sequence, 177 residues long: Centromere protein R (177 aa).

K8 is covalently cross-linked (Glycyl lysine isopeptide (Lys-Gly) (interchain with G-Cter in SUMO2)). The short motif at 9 to 13 (LDGLL) is the LXXLL motif element. Position 17 is a phosphoserine (S17). A DD1 region spans residues 20-50 (PSKITRKKSVITYSPTTGTCQMSLFASPTSS). K22 is covalently cross-linked (Glycyl lysine isopeptide (Lys-Gly) (interchain with G-Cter in SUMO2)). At S28 the chain carries Phosphoserine. Over residues 41 to 50 (MSLFASPTSS) the composition is skewed to polar residues. The tract at residues 41-81 (MSLFASPTSSEEQKHRNGLSNEKRKKLNHPSLTESKESTTK) is disordered. The Nuclear localization signal motif lies at 63–66 (KRKK). Residue S71 is modified to Phosphoserine. Residues 83–113 (NDEFMMLLSKVEKLSEEIMEIMQNLSSIQAL) adopt a coiled-coil conformation. Residues 172 to 176 (LKAIL) carry the LXXIL motif motif.

As to quaternary structure, homodimer; mediated by the coiled coil domain. Isoform 3, but not other isoforms, interacts with the cytoplasmic tail of integrin ITGB3. The relevance of the interaction with ITGB3 is however uncertain, since isoform 3 is mainly nuclear. Interacts with CCNA2 and MTA1. Interacts with NFKB1 NF-kappa-B subunit. Component of the CENPA-CAD complex, composed of CENPI, CENPK, CENPL, CENPO, CENPP, CENPQ, CENPR and CENPS. The CENPA-CAD complex interacts with the CENPA-NAC complex, at least composed of CENPA, CENPC, CENPH, CENPM, CENPN, CENPT and CENPU. Interacts with TASOR. In terms of tissue distribution, widely expressed. Expressed in spleen, thymus, prostate, ovary, small intestine and white blood cells. Highly expressed in testis and colon. Isoform 4 is expressed in platelets, lymphocytes and granulocytes.

The protein resides in the nucleus. It is found in the chromosome. It localises to the centromere. Its subcellular location is the kinetochore. The protein localises to the cytoplasm. Transcription coregulator that can have both coactivator and corepressor functions. Isoform 1, but not other isoforms, is involved in the coactivation of nuclear receptors for retinoid X (RXRs) and thyroid hormone (TRs) in a ligand-dependent fashion. In contrast, it does not coactivate nuclear receptors for retinoic acid, vitamin D, progesterone receptor, nor glucocorticoid. Acts as a coactivator for estrogen receptor alpha. Acts as a transcriptional corepressor via its interaction with the NFKB1 NF-kappa-B subunit, possibly by interfering with the transactivation domain of NFKB1. Induces apoptosis in breast cancer cells, but not in other cancer cells, via a caspase-2 mediated pathway that involves mitochondrial membrane permeabilization but does not require other caspases. May also act as an inhibitor of cyclin A-associated kinase. Also acts a component of the CENPA-CAD (nucleosome distal) complex, a complex recruited to centromeres which is involved in assembly of kinetochore proteins, mitotic progression and chromosome segregation. May be involved in incorporation of newly synthesized CENPA into centromeres via its interaction with the CENPA-NAC complex. This is Centromere protein R (ITGB3BP) from Homo sapiens (Human).